We begin with the raw amino-acid sequence, 2514 residues long: Probable polyketide synthase 8/35 (2514 aa).

The Ketosynthase family 3 (KS3) domain maps to Asp-11–Glu-442. Active-site for beta-ketoacyl synthase activity residues include Cys-181, His-323, and His-362. An acyl/malonyl transferase region spans residues Gly-635–Tyr-668. The active-site For acyl/malonyl transferase activity is the Ser-645. The segment at Ile-925 to Asn-1047 is N-terminal hotdog fold. One can recognise a PKS/mFAS DH domain in the interval Ile-925–Ser-1209. The active-site Proton acceptor; for dehydratase activity is the His-959. Positions Asn-1064–Ser-1209 are C-terminal hotdog fold. Catalysis depends on Asp-1122, which acts as the Proton donor; for dehydratase activity. The region spanning Ile-2431–Leu-2508 is the Carrier domain. Ser-2468 carries the post-translational modification O-(pantetheine 4'-phosphoryl)serine.

Pantetheine 4'-phosphate serves as cofactor.

Its function is as follows. Probable polyketide synthase. This chain is Probable polyketide synthase 8/35 (pks8), found in Dictyostelium discoideum (Social amoeba).